Here is a 542-residue protein sequence, read N- to C-terminus: Phosphoenolpyruvate carboxykinase (ATP) (542 aa).

Arginine 67, tyrosine 208, and lysine 214 together coordinate substrate. ATP contacts are provided by residues lysine 214, histidine 233, and 249–257 (GLSGTGKTT). Residues lysine 214 and histidine 233 each coordinate Mn(2+). Aspartate 270 serves as a coordination point for Mn(2+). Residues glutamate 298, arginine 334, 450–451 (RI), and threonine 456 each bind ATP. Substrate is bound at residue arginine 334.

The protein belongs to the phosphoenolpyruvate carboxykinase (ATP) family. As to quaternary structure, monomer. Requires Mn(2+) as cofactor.

The protein localises to the cytoplasm. It carries out the reaction oxaloacetate + ATP = phosphoenolpyruvate + ADP + CO2. The protein operates within carbohydrate biosynthesis; gluconeogenesis. Functionally, involved in the gluconeogenesis. Catalyzes the conversion of oxaloacetate (OAA) to phosphoenolpyruvate (PEP) through direct phosphoryl transfer between the nucleoside triphosphate and OAA. This Vibrio vulnificus (strain CMCP6) protein is Phosphoenolpyruvate carboxykinase (ATP).